Here is an 822-residue protein sequence, read N- to C-terminus: MMLRWSGIWGLSPPRIFPSLLVVVALVGLLPVLRSHGLQPSPTANTIRGAEPPRERSIGDVTTAPSEPVHHPDDRNLTNLHIEHGAKTLRKAFPVLDIDYLHVRTPFEISLWILLACLMKIGFHVIPTISSIVPESCLLIVVGLLVGGLIKGVGETPPFLQSDVFFLFLLPPIILDAGYFLPLRQFTENLGTILIFAVVGTLWNAFFLGGLLYAVCLVGGEQINNIGLLDTLLFGSIISAVDPVAVVAVFEEIHINELLHILVFGESLLNDAVTVVLYHLFEEFANYDSIGISDIFLGFLSFFVVALGGVFVGVVYGVIAAFTSRFTSHIRVIEPLFVFLYSYMAYLSAELFHLSGIMALIASGVVMRPYVEANISHKSHTTIKYFLKMWSSVSETLIFIFLGVSTVAGSHQWNWTFVISTLLFCLIARVLGVLVLTWFINKFRIVKLTPKDQFIIAYGGLRGAIAFSLGYLMDKKHFPMCDLFLTAIITVIFFTVFVQGMTIRPLVDLLAVKKKQETKRSINEEIHTQFLDHLLTGIEDICGHYGHHHWKDKLNRFNKKYVKKCLIAGERSKEPQLIAFYHKMEMKQAIELVESGGMGKIPSAVSTVSMQNIHPKSMASERILPALSKDKEEEIRKILRSNLQKTRQRLRSYNRHTLVADPYEEAWNQMLLRRQKARQLEQKMSNYLTVPAHKLDSPTMSRARIGSDPLAYEPKADLPVITIDPASPQSPESVDLVNEELKAKVLGVNRDPTRLTRGEEDEDEDEDGVIMMRRKEPSSPGTDVFTPAPMYSPSSQRIQRCLSDPGPHPEPGEGEPFIPKGE.

The Extracellular portion of the chain corresponds to 1–102; the sequence is MMLRWSGIWG…FPVLDIDYLH (102 aa). Residues 41–73 form a disordered region; it reads SPTANTIRGAEPPRERSIGDVTTAPSEPVHHPD. Residues 103-125 form a helical membrane-spanning segment; it reads VRTPFEISLWILLACLMKIGFHV. At 126-134 the chain is on the cytoplasmic side; the sequence is IPTISSIVP. A helical transmembrane segment spans residues 135–152; the sequence is ESCLLIVVGLLVGGLIKG. The Extracellular portion of the chain corresponds to 153-162; sequence VGETPPFLQS. Residues 163–180 traverse the membrane as a helical segment; that stretch reads DVFFLFLLPPIILDAGYF. Over 181–190 the chain is Cytoplasmic; it reads LPLRQFTENL. A helical membrane pass occupies residues 191-219; it reads GTILIFAVVGTLWNAFFLGGLLYAVCLVG. At 220–226 the chain is on the extracellular side; it reads GEQINNI. A helical transmembrane segment spans residues 227–253; it reads GLLDTLLFGSIISAVDPVAVVAVFEEI. At 254-256 the chain is on the cytoplasmic side; it reads HIN. Residues 257–287 form a helical membrane-spanning segment; it reads ELLHILVFGESLLNDAVTVVLYHLFEEFANY. Residues 288–291 lie on the Extracellular side of the membrane; sequence DSIG. The helical transmembrane segment at 292–326 threads the bilayer; it reads ISDIFLGFLSFFVVALGGVFVGVVYGVIAAFTSRF. Residues 327–332 are Cytoplasmic-facing; the sequence is TSHIRV. A helical membrane pass occupies residues 333–345; the sequence is IEPLFVFLYSYMA. The Extracellular segment spans residues 346–354; sequence YLSAELFHL. Residues 355–375 traverse the membrane as a helical segment; the sequence is SGIMALIASGVVMRPYVEANI. At 376-377 the chain is on the cytoplasmic side; the sequence is SH. The chain crosses the membrane as a helical span at residues 378-408; sequence KSHTTIKYFLKMWSSVSETLIFIFLGVSTVA. The Extracellular portion of the chain corresponds to 409-414; sequence GSHQWN. The chain crosses the membrane as a helical span at residues 415-442; the sequence is WTFVISTLLFCLIARVLGVLVLTWFINK. Residues 443–448 lie on the Cytoplasmic side of the membrane; that stretch reads FRIVKL. Residues 449–473 form a helical membrane-spanning segment; sequence TPKDQFIIAYGGLRGAIAFSLGYLM. The Extracellular segment spans residues 474–479; sequence DKKHFP. A helical membrane pass occupies residues 480-509; the sequence is MCDLFLTAIITVIFFTVFVQGMTIRPLVDL. The tract at residues 507–549 is interaction with TESC; the sequence is VDLLAVKKKQETKRSINEEIHTQFLDHLLTGIEDICGHYGHHH. The Cytoplasmic portion of the chain corresponds to 510–822; that stretch reads LAVKKKQETK…EGEPFIPKGE (313 aa). Positions 513-520 are PI(4,5)P2-binding region; that stretch reads KKKQETKR. Residues 519-549 are interaction with CHP2; the sequence is KRSINEEIHTQFLDHLLTGIEDICGHYGHHH. Positions 544-549 are confers pH-dependent PI(4,5)P2 binding; it reads HYGHHH. The segment at 556–564 is PI(4,5)P2-binding region; the sequence is RFNKKYVKK. Ser-603 and Ser-606 each carry phosphoserine. Position 607 is a phosphothreonine (Thr-607). Phosphoserine is present on residues Ser-609 and Ser-652. The segment at 637 to 822 is interaction with TESC; the sequence is KILRSNLQKT…EGEPFIPKGE (186 aa). The interval 637-822 is interaction with CALM1; the sequence is KILRSNLQKT…EGEPFIPKGE (186 aa). Residues 688 to 691 form an interaction with PPP3CA region; the sequence is LTVP. Residues Ser-697, Ser-701, and Ser-707 each carry the phosphoserine modification. An interaction with PPP3CA region spans residues 719 to 724; that stretch reads PVITID. A phosphoserine mark is found at Ser-727, Ser-730, and Ser-733. The tract at residues 752 to 822 is disordered; it reads PTRLTRGEED…EGEPFIPKGE (71 aa). Thr-756 carries the post-translational modification Phosphothreonine. The segment covering 759–768 has biased composition (acidic residues); it reads EEDEDEDEDG. At Thr-786 the chain carries Phosphothreonine. Phosphoserine occurs at positions 792, 794, and 803.

This sequence belongs to the monovalent cation:proton antiporter 1 (CPA1) transporter (TC 2.A.36) family. In terms of assembly, homodimer; dimerization is crucial for its function. Oligomer. Interacts with CALM in a calcium-dependent manner. Interacts with TESC. Interacts (via the juxtamembrane region of the cytoplasmic C-terminal domain) with CHP1; the interaction occurs at the plasma membrane in a calcium-dependent manner. Interacts with CHP2; the interaction occurs in a calcium-dependent manner. Interacts with EZR; regulates the cytoskeletal interactions of SLC9A1 and promotes stress fiber formation. Ubiquitinated, leading to its degradation by the proteasome. Ubiquitination is reduced by CHP1. Post-translationally, O-glycosylated. In terms of processing, palmitoylated; may play a major role in SLC9A1 regulation. Phosphorylation at Thr-786 increases SLC9A1 activity. Specifically dephosphorylated at Thr-786 by PPP3CA that negatively regulates SLC9A1 activity. Phosphorylation at Ser-652 by AKT1 reduces SLC9A1 binding to CALM1.

Its subcellular location is the cell membrane. The protein resides in the basolateral cell membrane. It carries out the reaction Na(+)(in) + H(+)(out) = Na(+)(out) + H(+)(in). The enzyme catalyses Li(+)(out) + H(+)(in) = Li(+)(in) + H(+)(out). It catalyses the reaction Li(+)(in) + Na(+)(out) = Li(+)(out) + Na(+)(in). With respect to regulation, activated at acidic pHs. Inhibited by amiloride and 5-amino-substituted derivatives. Inhibited by cariporide and eniporide. Phosphatidylinositol 4,5-bisphosphate (PI(4,5)P2) and phosphatidylinositol 3,4,5-trisphosphate (PI(3,4,5)P3) bind and differentially regulate SLC9A1 activity. Its function is as follows. Electroneutral Na(+) /H(+) antiporter that extrudes Na(+) in exchange for external protons driven by the inward sodium ion chemical gradient, protecting cells from acidification that occurs from metabolism. Exchanges intracellular H(+) ions for extracellular Na(+) in 1:1 stoichiometry. Plays a key role in maintening intracellular pH neutral and cell volume, and thus is important for cell growth, proliferation, migration and survival. In addition, can transport lithium Li(+) and also functions as a Na(+)/Li(+) antiporter. SLC9A1 also functions in membrane anchoring and organization of scaffolding complexes that coordinate signaling inputs. In Cricetulus griseus (Chinese hamster), this protein is Sodium/hydrogen exchanger 1 (SLC9A1).